We begin with the raw amino-acid sequence, 150 residues long: 16.6 kDa heat shock protein (150 aa).

Positions 31–150 (AERCPVLTNV…PQLKAIPISG (120 aa)) constitute a sHSP domain.

The protein belongs to the small heat shock protein (HSP20) family. In terms of assembly, may form oligomeric structures.

The protein localises to the cytoplasm. The polypeptide is 16.6 kDa heat shock protein (HSP16.6) (Oryza sativa subsp. japonica (Rice)).